The sequence spans 87 residues: Small ribosomal subunit protein bS20 (87 aa).

The tract at residues Met-1–Ala-22 is disordered. A compositionally biased stretch (basic residues) spans Ala-7–Ala-19.

It belongs to the bacterial ribosomal protein bS20 family.

In terms of biological role, binds directly to 16S ribosomal RNA. The polypeptide is Small ribosomal subunit protein bS20 (Laribacter hongkongensis (strain HLHK9)).